We begin with the raw amino-acid sequence, 261 residues long: tRNA(His) guanylyltransferase (261 aa).

Mg(2+)-binding residues include D29, G30, and D76. GTP contacts are provided by residues 29–34 (DGKGFH) and 75–76 (SD).

The protein belongs to the tRNA(His) guanylyltransferase family. Mg(2+) serves as cofactor.

It carries out the reaction a 5'-end ribonucleotide-tRNA(His) + GTP + ATP + H2O = a 5'-end phospho-guanosine-ribonucleotide-tRNA(His) + AMP + 2 diphosphate + H(+). Functionally, adds a GMP to the 5'-end of tRNA(His) after transcription and RNase P cleavage. This chain is tRNA(His) guanylyltransferase (thg1), found in Schizosaccharomyces pombe (strain 972 / ATCC 24843) (Fission yeast).